Reading from the N-terminus, the 109-residue chain is Movement protein (109 aa).

The segment at 1 to 28 (MDSFGRAPPLWPQSALPRVPGAAPSSSG) is disordered. Residues 34-54 (VGEIAIFTFVAVLALYLLWSW) traverse the membrane as a helical segment.

The protein belongs to the mastrevirus movement protein family. As to quaternary structure, interacts with the capsid protein (CP). Part of a MP-CP-viral DNA complex.

It localises to the host membrane. Functionally, involved in the viral transport within, and between cells. The polypeptide is Movement protein (Sugarcane streak virus (isolate South Africa) (SSV)).